Reading from the N-terminus, the 324-residue chain is UDP-N-acetylenolpyruvoylglucosamine reductase (324 aa).

The 180-residue stretch at 38–217 folds into the FAD-binding PCMH-type domain; sequence AGGLAELMFQ…IRAEMDAVRQ (180 aa). Residue Arg-183 is part of the active site. Ser-232 functions as the Proton donor in the catalytic mechanism. Glu-302 is an active-site residue.

The protein belongs to the MurB family. The cofactor is FAD.

It is found in the cytoplasm. It catalyses the reaction UDP-N-acetyl-alpha-D-muramate + NADP(+) = UDP-N-acetyl-3-O-(1-carboxyvinyl)-alpha-D-glucosamine + NADPH + H(+). It functions in the pathway cell wall biogenesis; peptidoglycan biosynthesis. Cell wall formation. This chain is UDP-N-acetylenolpyruvoylglucosamine reductase, found in Allorhizobium ampelinum (strain ATCC BAA-846 / DSM 112012 / S4) (Agrobacterium vitis (strain S4)).